We begin with the raw amino-acid sequence, 94 residues long: Large ribosomal subunit protein eL43A (94 aa).

The C4-type zinc-finger motif lies at 39–62 (CPFCGRNTVKRTAAGIWCCNGKGC).

Belongs to the eukaryotic ribosomal protein eL43 family. In terms of assembly, component of the large ribosomal subunit (LSU). Mature yeast ribosomes consist of a small (40S) and a large (60S) subunit. The 40S small subunit contains 1 molecule of ribosomal RNA (18S rRNA) and at least 33 different proteins. The large 60S subunit contains 3 rRNA molecules (25S, 5.8S and 5S rRNA) and at least 46 different proteins.

It localises to the cytoplasm. Component of the ribosome, a large ribonucleoprotein complex responsible for the synthesis of proteins in the cell. The small ribosomal subunit (SSU) binds messenger RNAs (mRNAs) and translates the encoded message by selecting cognate aminoacyl-transfer RNA (tRNA) molecules. The large subunit (LSU) contains the ribosomal catalytic site termed the peptidyl transferase center (PTC), which catalyzes the formation of peptide bonds, thereby polymerizing the amino acids delivered by tRNAs into a polypeptide chain. The nascent polypeptides leave the ribosome through a tunnel in the LSU and interact with protein factors that function in enzymatic processing, targeting, and the membrane insertion of nascent chains at the exit of the ribosomal tunnel. The chain is Large ribosomal subunit protein eL43A (rpl4301) from Schizosaccharomyces pombe (strain 972 / ATCC 24843) (Fission yeast).